We begin with the raw amino-acid sequence, 177 residues long: Nucleoside triphosphate/diphosphate phosphatase (177 aa).

Residue Arg23 is the Proton donor of the active site. Residues Asn87, Asp103, Asp105, Asp107, Asp120, and Glu123 each coordinate Mg(2+).

Belongs to the Ntdp family. Mg(2+) serves as cofactor.

It carries out the reaction a ribonucleoside 5'-triphosphate + H2O = a ribonucleoside 5'-diphosphate + phosphate + H(+). The enzyme catalyses a ribonucleoside 5'-diphosphate + H2O = a ribonucleoside 5'-phosphate + phosphate + H(+). In terms of biological role, has nucleoside phosphatase activity towards nucleoside triphosphates and nucleoside diphosphates. This Streptococcus sanguinis (strain SK36) protein is Nucleoside triphosphate/diphosphate phosphatase.